The chain runs to 373 residues: D-alanine--D-alanine ligase (373 aa).

An ATP-grasp domain is found at K156–D363. R184–E239 contributes to the ATP binding site. 3 residues coordinate Mg(2+): D318, E330, and N332.

Belongs to the D-alanine--D-alanine ligase family. Mg(2+) serves as cofactor. Mn(2+) is required as a cofactor.

The protein resides in the cytoplasm. It catalyses the reaction 2 D-alanine + ATP = D-alanyl-D-alanine + ADP + phosphate + H(+). The protein operates within cell wall biogenesis; peptidoglycan biosynthesis. Cell wall formation. The polypeptide is D-alanine--D-alanine ligase (Mycolicibacterium smegmatis (strain ATCC 700084 / mc(2)155) (Mycobacterium smegmatis)).